The following is a 189-amino-acid chain: Autophagy receptor ATG45 (189 aa).

Positions 1-96 (MSNFLLVIPE…TNNILHFKDN (96 aa)) are binds glycogen. The segment at 97–189 (EASQLMDIPL…AKKVKTYWNK (93 aa)) is required for sequestration into autophagosomes. Ser-107 is modified (phosphoserine). The ATG8 interaction motif (AIM) signature appears at 127 to 130 (YVNL). Ser-172 carries the post-translational modification Phosphoserine. The interval 176-187 (LMCIAKKVKTYW) is may facilitate interactions with the autophagosome membrane.

In terms of assembly, interacts with ATG8.

The protein localises to the cytoplasm. Its subcellular location is the cytosol. It is found in the cytoplasmic vesicle. The protein resides in the autophagosome. In terms of biological role, autophagy receptor for glycogen that facilitates the sequestration of glycogen assemblies into autophagosomes as part of bulk autophagy; the autophagy of glycogen (glycophagy) is stimulated during prolonged nitrogen starvation and during sporulation. The chain is Autophagy receptor ATG45 from Saccharomyces cerevisiae (strain ATCC 204508 / S288c) (Baker's yeast).